The following is a 375-amino-acid chain: Probable UDP-N-acetylglucosamine 2-epimerase (375 aa).

It belongs to the UDP-N-acetylglucosamine 2-epimerase family.

It localises to the cytoplasm. It catalyses the reaction UDP-N-acetyl-alpha-D-glucosamine = UDP-N-acetyl-alpha-D-mannosamine. The protein operates within glycan metabolism; exopolysaccharide EPS I biosynthesis. Functionally, may be involved in synthesis of N-acetyltrideoxygalactose, a component of exopolysaccharide EPS I which functions as a virulence factor. The protein is Probable UDP-N-acetylglucosamine 2-epimerase (epsC) of Ralstonia solanacearum (Pseudomonas solanacearum).